Consider the following 269-residue polypeptide: Calretinin (269 aa).

EF-hand domains lie at 14–49 (LSAS…LESA), 61–96 (SLGD…EENF), 105–140 (GSSS…LLKK), 149–184 (KLQE…QENF), 193–228 (LSSE…LYEK), and 230–265 (KKEM…VLCS). Ca(2+) is bound by residues Asp27, Asp29, Asn31, Tyr33, Glu38, Asp74, Asn76, Asp78, Lys80, Glu85, Asp118, Asp120, Ser122, Tyr124, Glu129, Asp162, Asn164, Asp166, Lys168, Glu173, Asp206, Asp208, Ser210, and Glu217.

This sequence belongs to the calbindin family.

Its subcellular location is the synapse. The protein resides in the cell projection. The protein localises to the dendrite. Its function is as follows. Calcium-binding protein involved in calcium homeostasis and signal transduction. It plays a critical role in buffering intracellular calcium levels and modulating calcium-dependent signaling pathways. Predominantly expressed in specific neuronal populations, influences synaptic plasticity and neuronal excitability, contributing to learning and memory. During embryonic development, it facilitates neuronal differentiation and maturation. The polypeptide is Calretinin (CALB2) (Gallus gallus (Chicken)).